The primary structure comprises 964 residues: Translation initiation factor IF-2 (964 aa).

The segment covering 1 to 10 (MSDKTNDDKT) has biased composition (basic and acidic residues). Positions 1–379 (MSDKTNDDKT…SQMQETREKI (379 aa)) are disordered. Residues 27–37 (EQSTVRQNFSH) are compositionally biased toward polar residues. Low complexity predominate over residues 77-102 (APAASTPAPAQAAQPAQAAPVVRAPA). Residues 103-113 (PATPAPKPAAP) show a composition bias toward pro residues. Low complexity predominate over residues 114–140 (AAPVTKPHVAQQRPAQQRPGGQQAQRP). Composition is skewed to basic and acidic residues over residues 156 to 227 (SEMD…EAAK) and 234 to 243 (ARTERRDDAR). Low complexity predominate over residues 250 to 278 (RPQQAGRPQGNRPPQGGRPQQGGPRPAAP). Residues 323-338 (PEVRAPKVVKTEDDRR) are compositionally biased toward basic and acidic residues. The 168-residue stretch at 462–629 (SRPPVVTIMG…AILLQAEILD (168 aa)) folds into the tr-type G domain. Positions 471-478 (GHVDHGKT) are G1. GTP is bound at residue 471 to 478 (GHVDHGKT). The G2 stretch occupies residues 496 to 500 (GITQH). Residues 517 to 520 (DTPG) are G3. GTP contacts are provided by residues 517-521 (DTPGH) and 571-574 (NKID). The tract at residues 571–574 (NKID) is G4. The segment at 607–609 (SAK) is G5.

It belongs to the TRAFAC class translation factor GTPase superfamily. Classic translation factor GTPase family. IF-2 subfamily.

Its subcellular location is the cytoplasm. Its function is as follows. One of the essential components for the initiation of protein synthesis. Protects formylmethionyl-tRNA from spontaneous hydrolysis and promotes its binding to the 30S ribosomal subunits. Also involved in the hydrolysis of GTP during the formation of the 70S ribosomal complex. This Brucella anthropi (strain ATCC 49188 / DSM 6882 / CCUG 24695 / JCM 21032 / LMG 3331 / NBRC 15819 / NCTC 12168 / Alc 37) (Ochrobactrum anthropi) protein is Translation initiation factor IF-2.